We begin with the raw amino-acid sequence, 960 residues long: Dynamin-like GTPase OPA1, mitochondrial (960 aa).

A mitochondrion-targeting transit peptide spans 1 to 87 (MWRLRRAAVA…IKYGYQPRRN (87 aa)). The Mitochondrial matrix segment spans residues 88-96 (FWPARLATR). A helical membrane pass occupies residues 97–113 (LLKLRYLILGSAVGGGY). Residues 114 to 770 (TAKKTFDQWK…NAIENMVGPD (657 aa)) are Mitochondrial intermembrane-facing. 2 short sequence motifs (LQQQIQ motif) span residues 181-186 (DFFTSG) and 217-222 (QLQEEL). A coiled-coil region spans residues 210–254 (SDKEKIDQLQEELLHTQLKYQRILERLEKENKELRKLVLQKDDKG). At K228 the chain carries N6-acetyllysine. The LQQQIQ motif signature appears at 235-240 (RLEKEN). One can recognise a Dynamin-type G domain in the interval 285–561 (QDHLPRVVVV…FWKMVRESVE (277 aa)). The tract at residues 295-302 (GDQSAGKT) is G1 motif. The GTP site is built by S298, G300, K301, T302, S303, and G317. T302 provides a ligand contact to Mg(2+). The segment at 321–324 (MMTR) is G2 motif. Residues T323 and D398 each contribute to the Mg(2+) site. Residues 398-401 (DLPG) are G3 motif. Positions 467-470 (TKVD) are G4 motif. The GTP site is built by K468, D470, T503, G506, and N507. Positions 501–504 (VVTG) are G5 motif. 2 stalk region regions span residues 589–836 (DRNE…IKDT) and 874–928 (CNDV…IKLL). A paddle region region spans residues 736–856 (SDKQQWDAAI…KTALNHCNLC (121 aa)). Residues 771 to 781 (WKKRWLYWKNR) lie within the membrane without spanning it. Topologically, residues 782-960 (TQEQCVHNET…AFIEALHQEK (179 aa)) are mitochondrial intermembrane. C856 and C874 are oxidised to a cystine. Residues 895 to 960 (RQQLTNTEVR…AFIEALHQEK (66 aa)) adopt a coiled-coil conformation.

It belongs to the TRAFAC class dynamin-like GTPase superfamily. Dynamin/Fzo/YdjA family. Oligomeric complex consisting of membrane-bound and soluble forms of OPA1. Interacts with RCC1L; RCC1L acts as a guanine nucleotide exchange factor (GEF) for OPA1 by exchanging bound GDP for free GTP. Interacts with CHCHD3 and IMMT; these interactions occur preferentially with soluble OPA1 forms. Interacts with PRELID1. Cleaved by OMA1 or YME1L downstream of the transmembrane region in response to different signals to generate soluble forms. Cleaved by OMA1 at position S1 following stress conditions, generating the short soluble form (Dynamin-like GTPase OPA1, short form; S-OPA1). AFG3L2 is involved in the regulation of OMA1-dependent processing of OPA1. PARL-dependent proteolytic processing releases an antiapoptotic soluble form not required for mitochondrial fusion. Post-translationally, cleavage at position S2 by YME1L is required to mediate oxidative phosphorylation (OXPHOS)-induced mitochondrial fusion. Cleavage occurs in the sequence motif Leu-Gln-Gln-Gln-Ile-Gln (LQQQIQ). In terms of processing, cleavage at position S2 by YME1L is required to mediate oxidative phosphorylation (OXPHOS)-induced mitochondrial fusion. Cleavage occurs in the sequence motif Leu-Gln-Gln-Gln-Ile-Gln (LQQQIQ). Cleavage at position S3 by YME1L is required for membrane tubulation. Cleavage at position S3 by YME1L is required for membrane tubulation. Highly expressed in retina. Also expressed in brain, testis, heart and skeletal muscle. Low levels of all isoforms expressed in a variety of tissues. In terms of tissue distribution, expressed in retina, skeletal muscle, heart, lung, ovary, colon, thyroid gland, leukocytes and fetal brain. Low levels of all isoforms expressed in a variety of tissues. As to expression, isoform 2 expressed in colon, liver, kidney, thyroid gland and leukocytes.

The protein resides in the mitochondrion inner membrane. Its subcellular location is the mitochondrion intermembrane space. The catalysed reaction is GTP + H2O = GDP + phosphate + H(+). With respect to regulation, activated by guanine nucleotide exchange factor RCC1L. Functionally, dynamin-related GTPase that is essential for normal mitochondrial morphology by mediating fusion of the mitochondrial inner membranes, regulating cristae morphology and maintaining respiratory chain function. Exists in two forms: the transmembrane, long form (Dynamin-like GTPase OPA1, long form; L-OPA1), which is tethered to the inner mitochondrial membrane, and the short soluble form (Dynamin-like GTPase OPA1, short form; S-OPA1), which results from proteolytic cleavage and localizes in the intermembrane space. Both forms (L-OPA1 and S-OPA1) cooperate to catalyze the fusion of the mitochondrial inner membrane. The equilibrium between L-OPA1 and S-OPA1 is essential: excess levels of S-OPA1, produced by cleavage by OMA1 following loss of mitochondrial membrane potential, lead to an impaired equilibrium between L-OPA1 and S-OPA1, inhibiting mitochondrial fusion. The balance between L-OPA1 and S-OPA1 also influences cristae shape and morphology. Involved in remodeling cristae and the release of cytochrome c during apoptosis. Proteolytic processing by PARL in response to intrinsic apoptotic signals may lead to disassembly of OPA1 oligomers and release of the caspase activator cytochrome C (CYCS) into the mitochondrial intermembrane space. Acts as a regulator of T-helper Th17 cells, which are characterized by cells with fused mitochondria with tight cristae, by mediating mitochondrial membrane remodeling: OPA1 is required for interleukin-17 (IL-17) production. Its role in mitochondrial morphology is required for mitochondrial genome maintenance. Constitutes the transmembrane long form (L-OPA1) that plays a central role in mitochondrial inner membrane fusion and cristae morphology. L-OPA1 and the soluble short form (S-OPA1) form higher-order helical assemblies that coordinate the fusion of mitochondrial inner membranes. Inner membrane-anchored L-OPA1 molecules initiate membrane remodeling by recruiting soluble S-OPA1 to rapidly polymerize into a flexible cylindrical scaffold encaging the mitochondrial inner membrane. Once at the membrane surface, the formation of S-OPA1 helices induce bilayer curvature. OPA1 dimerization through the paddle region, which inserts into cardiolipin-containing membrane, promotes GTP hydrolysis and the helical assembly of a flexible OPA1 lattice on the membrane, which drives membrane curvature and mitochondrial fusion. Plays a role in the maintenance and remodeling of mitochondrial cristae, some invaginations of the mitochondrial inner membrane that provide an increase in the surface area. Probably acts by forming helical filaments at the inside of inner membrane tubes with the shape and dimensions of crista junctions. The equilibrium between L-OPA1 and S-OPA1 influences cristae shape and morphology: increased L-OPA1 levels promote cristae stacking and elongated mitochondria, while increased S-OPA1 levels correlated with irregular cristae packing and round mitochondria shape. Its function is as follows. Constitutes the soluble short form (S-OPA1) generated by cleavage by OMA1, which plays a central role in mitochondrial inner membrane fusion and cristae morphology. The transmembrane long form (L-OPA1) and the S-OPA1 form higher-order helical assemblies that coordinate the fusion of mitochondrial inner membranes. Inner membrane-anchored L-OPA1 molecules initiate membrane remodeling by recruiting soluble S-OPA1 to rapidly polymerize into a flexible cylindrical scaffold encaging the mitochondrial inner membrane. Once at the membrane surface, the formation of S-OPA1 helices induce bilayer curvature. OPA1 dimerization through the paddle region, which inserts into cardiolipin-containing membrane, promotes GTP hydrolysis and the helical assembly of a flexible OPA1 lattice on the membrane, which drives membrane curvature and mitochondrial fusion. Excess levels of S-OPA1 produced by cleavage by OMA1 following stress conditions that induce loss of mitochondrial membrane potential, lead to an impaired equilibrium between L-OPA1 and S-OPA1, thereby inhibiting mitochondrial fusion. Involved in mitochondrial safeguard in response to transient mitochondrial membrane depolarization by mediating flickering: cleavage by OMA1 leads to excess production of S-OPA1, preventing mitochondrial hyperfusion. Plays a role in the maintenance and remodeling of mitochondrial cristae, some invaginations of the mitochondrial inner membrane that provide an increase in the surface area. Probably acts by forming helical filaments at the inside of inner membrane tubes with the shape and dimensions of crista junctions. The equilibrium between L-OPA1 and S-OPA1 influences cristae shape and morphology: increased L-OPA1 levels promote cristae stacking and elongated mitochondria, while increased S-OPA1 levels correlated with irregular cristae packing and round mitochondria shape. In terms of biological role, coexpression of isoform 1 with shorter alternative products is required for optimal activity in promoting mitochondrial fusion. Functionally, isoforms that contain the alternative exon 4b are required for mitochondrial genome maintenance, possibly by anchoring the mitochondrial nucleoids to the inner mitochondrial membrane. This is Dynamin-like GTPase OPA1, mitochondrial from Homo sapiens (Human).